The following is a 353-amino-acid chain: MSLPQWCPPHSTLKRNPTTGEDVYCICKRPDYGELMVGCDGCDDWFHFTCLHIPEQFKDLVFSFYCPYCQAGITGKNKDAIINGEGSLPKTLWKRKCRISDCYKPCLQDSKYCSEEHGREFVNDIWSRLKTDEDRAVVKKMVEQTGHIDKFKKFGQLDFIDNNIVVKTDDEKEIFDQIVVRDMTLKTLEDDLQEVQEISLPLFKKKLELLEVYLGWLDNVYTEMRKLDDDAASHVECGKEDSKGTKRKKKKNSSRSRARKNICGYCSTYERIPCSVEEFVRDFGSNEEATKIHEVCTKWKCNRHLDWVSTNQEQYLQQIDSLESMQERLQHLIQARKKQLNIQYYEEILRRGL.

The segment at 22–72 (DVYCICKRPDYGELMVGCDGCDDWFHFTCLHIPEQFKDLVFSFYCPYCQAG) adopts a PHD-type zinc-finger fold. Zn(2+) contacts are provided by C25, C27, C39, C42, H47, C50, C66, and C69. Positions 83–124 (NGEGSLPKTLWKRKCRISDCYKPCLQDSKYCSEEHGREFVND) are non coventional C3H-type zinc finger. S87 carries the post-translational modification Phosphoserine. 4 residues coordinate Zn(2+): C97, C102, C113, and H117. The segment covering 235–244 (VECGKEDSKG) has biased composition (basic and acidic residues). The tract at residues 235-255 (VECGKEDSKGTKRKKKKNSSR) is disordered. The segment covering 245 to 255 (TKRKKKKNSSR) has biased composition (basic residues).

Component of the Set1C/COMPASS complex which consists of SET1(2), BRE2(2), SPP1(2), SDC1(1), SHG1(1), SWD1(1), SWD2(1), and SWD3(1).

The protein localises to the nucleus. In terms of biological role, component of the Set1C/COMPASS complex that specifically mono-, di- and trimethylates histone H3 to form H3K4me1/2/3, which subsequently plays a role in telomere length maintenance and transcription elongation regulation. COMPASS recognizes ubiquitinated H2B on one face of the nucleosome which stimulates the methylation of H3 on the opposing face. SPP1/CPS40 can recognize methylated histone lysine residue H3K4me3 or unmethylated H3K4. Stimulates the RNA binding activity of SET1. This chain is COMPASS component SPP1, found in Saccharomyces cerevisiae (strain ATCC 204508 / S288c) (Baker's yeast).